Here is a 374-residue protein sequence, read N- to C-terminus: Bifunctional enzyme IspD/IspF (374 aa).

The 2-C-methyl-D-erythritol 4-phosphate cytidylyltransferase stretch occupies residues 1–213 (MLDVTLIVLC…PCLKAPSNNF (213 aa)). The 2-C-methyl-D-erythritol 2,4-cyclodiphosphate synthase stretch occupies residues 214–374 (FTGTGFDIHA…TLKYYNWKKR (161 aa)). Residues Asp220 and His222 each coordinate a divalent metal cation. 4-CDP-2-C-methyl-D-erythritol 2-phosphate contacts are provided by residues 220–222 (DIH) and 246–247 (HS). Position 254 (His254) interacts with a divalent metal cation. 4-CDP-2-C-methyl-D-erythritol 2-phosphate-binding positions include 268–270 (DIG), 273–277 (FPDTD), 344–347 (TTAE), Phe351, and Arg354.

It in the N-terminal section; belongs to the IspD/TarI cytidylyltransferase family. IspD subfamily. The protein in the C-terminal section; belongs to the IspF family. The cofactor is a divalent metal cation.

It carries out the reaction 2-C-methyl-D-erythritol 4-phosphate + CTP + H(+) = 4-CDP-2-C-methyl-D-erythritol + diphosphate. The catalysed reaction is 4-CDP-2-C-methyl-D-erythritol 2-phosphate = 2-C-methyl-D-erythritol 2,4-cyclic diphosphate + CMP. Its pathway is isoprenoid biosynthesis; isopentenyl diphosphate biosynthesis via DXP pathway; isopentenyl diphosphate from 1-deoxy-D-xylulose 5-phosphate: step 2/6. It functions in the pathway isoprenoid biosynthesis; isopentenyl diphosphate biosynthesis via DXP pathway; isopentenyl diphosphate from 1-deoxy-D-xylulose 5-phosphate: step 4/6. Functionally, bifunctional enzyme that catalyzes the formation of 4-diphosphocytidyl-2-C-methyl-D-erythritol from CTP and 2-C-methyl-D-erythritol 4-phosphate (MEP) (IspD), and catalyzes the conversion of 4-diphosphocytidyl-2-C-methyl-D-erythritol 2-phosphate (CDP-ME2P) to 2-C-methyl-D-erythritol 2,4-cyclodiphosphate (ME-CPP) with a corresponding release of cytidine 5-monophosphate (CMP) (IspF). The polypeptide is Bifunctional enzyme IspD/IspF (Aliarcobacter butzleri (strain RM4018) (Arcobacter butzleri)).